We begin with the raw amino-acid sequence, 425 residues long: Histone-binding protein RBBP4 (425 aa).

Residue Ala2 is modified to N-acetylalanine. WD repeat units lie at residues 32-125 (YDLV…NHEG), 126-175 (EVNR…RLRG), 176-223 (HQKE…KTIF), 225-270 (GHTA…HSVD), 271-314 (AHTA…HSFE), 315-371 (SHKD…FIHG), and 372-404 (GHTAKISDFSWNPNEPWVICSVSEDNIMQVWQM). The interaction with HAT1 stretch occupies residues 361–406 (DGPPELLFIHGGHTAKISDFSWNPNEPWVICSVSEDNIMQVWQMAE).

It belongs to the WD repeat RBAP46/RBAP48/MSI1 family. As to quaternary structure, binds directly to histone H4, probably via helix 1 of the histone fold, a region that is not accessible when histone H4 is in chromatin. Interacts with CHAF1A, HDAC1, HDAC2, HDAC3 and HIRA. May also interact with HAT1.

It is found in the nucleus. The protein resides in the chromosome. Its subcellular location is the telomere. Its function is as follows. Core histone-binding subunit that may target chromatin assembly factors, chromatin remodeling factors and histone deacetylases to their histone substrates in a manner that is regulated by nucleosomal DNA. Component of several complexes which regulate chromatin metabolism. In Gallus gallus (Chicken), this protein is Histone-binding protein RBBP4 (RBBP4).